The chain runs to 240 residues: UDP-2,3-diacylglucosamine hydrolase (240 aa).

Positions 9, 11, 43, 81, and 116 each coordinate Mn(2+). 81–82 (NR) is a binding site for substrate. Positions 124, 162, 166, 169, and 197 each coordinate substrate. 2 residues coordinate Mn(2+): H197 and H199.

It belongs to the LpxH family. It depends on Mn(2+) as a cofactor.

It localises to the cell inner membrane. The enzyme catalyses UDP-2-N,3-O-bis[(3R)-3-hydroxytetradecanoyl]-alpha-D-glucosamine + H2O = 2-N,3-O-bis[(3R)-3-hydroxytetradecanoyl]-alpha-D-glucosaminyl 1-phosphate + UMP + 2 H(+). The protein operates within glycolipid biosynthesis; lipid IV(A) biosynthesis; lipid IV(A) from (3R)-3-hydroxytetradecanoyl-[acyl-carrier-protein] and UDP-N-acetyl-alpha-D-glucosamine: step 4/6. Functionally, hydrolyzes the pyrophosphate bond of UDP-2,3-diacylglucosamine to yield 2,3-diacylglucosamine 1-phosphate (lipid X) and UMP by catalyzing the attack of water at the alpha-P atom. Involved in the biosynthesis of lipid A, a phosphorylated glycolipid that anchors the lipopolysaccharide to the outer membrane of the cell. In Neisseria meningitidis serogroup C (strain 053442), this protein is UDP-2,3-diacylglucosamine hydrolase.